The following is a 333-amino-acid chain: Pollen allergen KBG 41 (333 aa).

The signal sequence occupies residues 1-23 (MAVHQYTVALFLAVALVAGPAAS). 2 consecutive repeat copies span residues 309 to 320 (TGAATAAAGGYK) and 321 to 332 (TGAATPTAGGYK). Residues 309–332 (TGAATAAAGGYKTGAATPTAGGYK) are 2 X 12 AA tandem repeats.

This sequence belongs to the Poa p IX/Phl p VI allergen family. In terms of tissue distribution, pollen.

The sequence is that of Pollen allergen KBG 41 from Poa pratensis (Kentucky bluegrass).